Reading from the N-terminus, the 470-residue chain is Cupincin (470 aa).

The signal sequence occupies residues 1-34; sequence MAKKKTSSSMARSQLAALLISLCFLSLASNAVGW. Residues 36–52 show a composition bias toward basic and acidic residues; the sequence is RRGEREEEDERRRHGGE. 2 disordered regions span residues 36–59 and 240–261; these read RRGE…PYHL and KSCS…PSSL. Cupin type-1 domains lie at 57–215 and 259–445; these read YHLG…EELE and SSLT…AREA. Residue N297 is glycosylated (N-linked (GlcNAc...) asparagine). Residues 330–368 are disordered; the sequence is PHVSGGGSSERREREREHGRRREEEQGEEEHGERGEKAR. The span at 338-367 shows a compositional bias: basic and acidic residues; sequence SERREREREHGRRREEEQGEEEHGERGEKA. H347, E352, and H360 together coordinate Zn(2+).

Belongs to the 7S seed storage protein family. In terms of assembly, homotrimer. Zn(2+) is required as a cofactor.

Its subcellular location is the secreted. Seed storage protein. Globulin-like protein that acts as a zinc metalloprotease. Cleaves specifically between Leu-15 and Tyr-16 of insulin B chain, and Gln-1 and Leu-2 of neurotensin (NT) peptide in vitro. May play a role as an initiating endopeptidase in germinating seeds. This is Cupincin from Oryza sativa subsp. japonica (Rice).